We begin with the raw amino-acid sequence, 538 residues long: uncharacterized protein (538 aa).

The segment covering 1–13 has biased composition (low complexity); it reads MYNNNSSTSSDSS. The disordered stretch occupies residues 1–43; that stretch reads MYNNNSSTSSDSSNSEEKANAQHASSTDSTSEHTDPAVADEGF. 12 helical membrane passes run 97–117, 134–154, 163–183, 194–214, 226–246, 254–274, 328–348, 367–387, 408–428, 434–454, 458–478, and 504–524; these read ILHV…SSVF, VALL…ILWA, KIPL…VAVA, FFSG…FADM, IFAC…GFLA, WTEY…LFMK, PIVF…YLLL, ALPY…IAYF, LPPM…LAWS, VHWI…LTIF, LIYL…ANTI, and GSLL…FFIF.

The protein belongs to the major facilitator superfamily. CAR1 family.

Its subcellular location is the endoplasmic reticulum. The protein localises to the membrane. This is an uncharacterized protein from Schizosaccharomyces pombe (strain 972 / ATCC 24843) (Fission yeast).